A 259-amino-acid chain; its full sequence is UPF0246 protein PP_1289 (259 aa).

Belongs to the UPF0246 family.

The chain is UPF0246 protein PP_1289 from Pseudomonas putida (strain ATCC 47054 / DSM 6125 / CFBP 8728 / NCIMB 11950 / KT2440).